The primary structure comprises 377 residues: Chaperone MoxR1 (377 aa).

The disordered stretch occupies residues 1–33; that stretch reads MTSAGGFPAGAGGYQTPGGHSASPAHEAPPGGA. The span at 7-16 shows a compositional bias: gly residues; sequence FPAGAGGYQT. The span at 19 to 33 shows a compositional bias: low complexity; sequence GHSASPAHEAPPGGA. 78-85 is an ATP binding site; that stretch reads GVPGVAKT.

The protein belongs to the MoxR family. As to quaternary structure, interacts with RipA. Interacts with host Toll-like receptor 4 (TLR4).

Functionally, displays ATP-enhanced chaperone activity. Required for the proper folding of the peptidoglycan endopeptidase RipA and its secretion through the TAT secretion system. In vitro, prevents thermal aggregation of MalZ protein and protects the functional activity of the restriction enzyme NdeI from thermal inactivation. Could be a moonlighting protein that uses a multipronged approach to dampen host-directed immunity for efficient replication, survival and pathogenesis. Can enhance virulence by inhibiting autophagy and apoptosis, and disrupting cellular bioenergetics. Binds and activates host TLR4 on the surface of macrophage cells, leading to the activation of the host NFKB and MAPK signaling cascades and enhanced secretion of proinflammatory cytokines. Inhibits autophagic flux via activation of PI3K-AKT-MTOR-ULK1 signaling cascade and represses apoptosis via inhibiting protooncogene c-FOS and MAPK JNK1/2. Also induces robust disruption of cellular bioenergetics by metabolic reprogramming to rewire the citric acid cycle intermediates for its benefit. In Mycobacterium tuberculosis (strain ATCC 25618 / H37Rv), this protein is Chaperone MoxR1.